A 179-amino-acid polypeptide reads, in one-letter code: Large ribosomal subunit protein uL6 (179 aa).

This sequence belongs to the universal ribosomal protein uL6 family. As to quaternary structure, part of the 50S ribosomal subunit.

Its function is as follows. This protein binds to the 23S rRNA, and is important in its secondary structure. It is located near the subunit interface in the base of the L7/L12 stalk, and near the tRNA binding site of the peptidyltransferase center. In Beutenbergia cavernae (strain ATCC BAA-8 / DSM 12333 / CCUG 43141 / JCM 11478 / NBRC 16432 / NCIMB 13614 / HKI 0122), this protein is Large ribosomal subunit protein uL6.